Here is a 341-residue protein sequence, read N- to C-terminus: MASVASSTVFASSLPHHRATTRAPPTPPRIPRRARLPGRSVVSCLPKRGSEKLVVTRASDEEGPPEPAGQGRGGGRAWPSLDASSCGLALAAAAGVLMLQGSQQALAGTEFMGMQDVVGDLGDISTGFASAFLLIFFSELGDRTFFIAALLAARNSGAIIFLGTFGALAVMTIISVVLGRAFHYVDGIIPFSFGGTDFPVDDFLAACLLVYYGVTTLLDAASGDEEKMNEEQEEAELAVSKFLGNGAGIISAASTIASTFVLVFIAEWGDKSFFSTIALAAASSPLGVIAGSLAGHAVATLIAVLGGSLLGTFLSEKIVAYIGGSLFLAFAAVTLVEIVNS.

Over residues 1-13 (MASVASSTVFASS) the composition is skewed to low complexity. 2 disordered regions span residues 1–41 (MASV…GRSV) and 54–76 (VVTR…GGGR). A chloroplast-targeting transit peptide spans 1-57 (MASVASSTVFASSLPHHRATTRAPPTPPRIPRRARLPGRSVVSCLPKRGSEKLVVTR). 7 helical membrane-spanning segments follow: residues 79–99 (PSLD…VLML), 117–137 (VVGD…LIFF), 158–178 (AIIF…SVVL), 203–223 (FLAA…AASG), 246–266 (GAGI…VFIA), 286–306 (LGVI…AVLG), and 318–338 (IVAY…LVEI).

The protein belongs to the GDT1 family.

Its subcellular location is the plastid. It localises to the chloroplast membrane. This is GDT1-like protein 1, chloroplastic from Oryza sativa subsp. indica (Rice).